The primary structure comprises 223 residues: Large ribosomal subunit protein bL21 (223 aa).

The protein belongs to the bacterial ribosomal protein bL21 family. In terms of assembly, part of the 50S ribosomal subunit. Contacts protein L20.

This protein binds to 23S rRNA in the presence of protein L20. The chain is Large ribosomal subunit protein bL21 from Mesorhizobium japonicum (strain LMG 29417 / CECT 9101 / MAFF 303099) (Mesorhizobium loti (strain MAFF 303099)).